The chain runs to 2499 residues: Probable polyketide synthase 22 (2499 aa).

One can recognise a Ketosynthase family 3 (KS3) domain in the interval 11 to 430; it reads DNQVAIVGLG…GSNACVLLSE (420 aa). Residues C177, H316, and H354 each act as for beta-ketoacyl synthase activity in the active site. Residues 623-656 are acyl/malonyl transferases; it reads GITPSIIVGHSLGEVASAFCSGMIDLETACFVIY. S633 serves as the catalytic For acyl/malonyl transferase activity. Residues 922-1044 form an N-terminal hotdog fold region; sequence APINQLGNKN…SRILMKSLDV (123 aa). The region spanning 922–1209 is the PKS/mFAS DH domain; it reads APINQLGNKN…IASTLSTKSE (288 aa). Residue H956 is the Proton acceptor; for dehydratase activity of the active site. A C-terminal hotdog fold region spans residues 1059–1209; that stretch reads NWSTLKREQL…IASTLSTKSE (151 aa). Residue D1121 is the Proton donor; for dehydratase activity of the active site. A Carrier domain is found at 2414-2491; that stretch reads EKEFSIRQDI…QIINIVTTKV (78 aa). O-(pantetheine 4'-phosphoryl)serine is present on S2451.

The cofactor is pantetheine 4'-phosphate.

In terms of biological role, probable polyketide synthase. The polypeptide is Probable polyketide synthase 22 (pks22) (Dictyostelium discoideum (Social amoeba)).